Reading from the N-terminus, the 770-residue chain is MFRYESLEDCPLDEDEDAFQGLGEEDEEIDQFNDDTFGSGAVDDDWQEAHERLAELEEKLPVAVNEQTGNGERDEMDLLGDHEENLAERLSKMVIENELEDPAIMRAVQTRPVLQPQPGSLNSSIWDGSEALRRIRGPLLAQEMPTVSVLEYALPQRPPQGPEDDRDLSERALPRRSTSPIIGSPPVRAVPIGTPPKQMAVPSFTQQILCPKPVHVRPPMPPRYPAPYGERMSPNQLCSVPNSSLLGHPFPPSVPPVLSPLQRAQLLGGAQLQPGRMSPSQFARVPGFVGSPLAAMNPKLLQGRVGQMLPPAPGFRAFFSAPPSATPPPQQHPPGPGPHLQNLRSQAPMFRPDTTHLHPQHRRLLHQRQQQNRNQHRNLNGAGDRGSHRSSHQDHLRKDPYANLMLQREKDWVSKIQMMQLQSTDPYLDDFYYQNYFEKLEKLSAAEEIQGDGPKKERTKLITPQVAKLEHTYKPVQFEGSLGKLTVSSVNNPRKMIDAVVTSRSEDDETKEKQVRDKRRKTLVIIEKTYSLLLDVEDYERRYLLSLEEERPALMDERKHKICSMYDNLRGKLPGQERPSDDHFVQIMCIRKGKRMVARILPFLSTEQAADILMTTARNLPFLIKKDAQDEVLPCLLSPFSLLLYHLPSVTITSLLQQLMNLPQSAATPAPSNPHLTAVLQNKFGLSLLLILLSRGEDLQSSDPATESTQNNQWTEVMFMATRELLRIPQAALAKPISIPTNLVSLFSRYVDRQKLNLLETKLQLVQGIR.

Positions 1-26 (MFRYESLEDCPLDEDEDAFQGLGEED) are disordered. A region A; interaction with DDX6/RCK region spans residues 1 to 84 (MFRYESLEDC…EMDLLGDHEE (84 aa)). An involved in nuclear foci localization region spans residues 1–397 (MFRYESLEDC…HRSSHQDHLR (397 aa)). The span at 7–26 (LEDCPLDEDEDAFQGLGEED) shows a compositional bias: acidic residues. The region N; interaction with decapping machinery stretch occupies residues 85-388 (NLAERLSKMV…LNGAGDRGSH (304 aa)). A Nuclear export signal motif is present at residues 86 to 95 (LAERLSKMVI). Residue Ser-177 is modified to Phosphoserine. Thr-178 is subject to Phosphothreonine. Ser-179 and Ser-184 each carry phosphoserine. The residue at position 194 (Thr-194) is a Phosphothreonine. An asymmetric dimethylarginine mark is found at Arg-217, Arg-223, and Arg-263. An involved in RNA-binding region spans residues 223–397 (RYPAPYGERM…HRSSHQDHLR (175 aa)). Phosphoserine is present on Ser-278. Arg-284 carries the asymmetric dimethylarginine modification. Disordered stretches follow at residues 315–344 (FRAF…QNLR) and 360–400 (QHRR…RKDP). The span at 324-337 (SATPPPQQHPPGPG) shows a compositional bias: pro residues. Positions 367-380 (QRQQQNRNQHRNLN) are enriched in low complexity. An Omega-N-methylarginine modification is found at Arg-385. Over residues 385 to 400 (RGSHRSSHQDHLRKDP) the composition is skewed to basic and acidic residues. The region H stretch occupies residues 389–448 (RSSHQDHLRKDPYANLMLQREKDWVSKIQMMQLQSTDPYLDDFYYQNYFEKLEKLSAAEE). Positions 398 to 770 (KDPYANLMLQ…TKLQLVQGIR (373 aa)) are involved in nuclear speckle localization. A region C region spans residues 449 to 770 (IQGDGPKKER…TKLQLVQGIR (322 aa)).

This sequence belongs to the PAT1 family. Interacts (via region A) with DDX6/RCK. Interacts (via region H and region C) with LSM1 and LSM4. Interacts (via region N) with DCP1A, DCP2, EDC3, EDC4 and XRN1. Interacts with the CCR4-NOT complex. Interacts with the Lsm-containing SMN-Sm protein complex. Interacts with EIF4ENIF1/4E-T.

It is found in the cytoplasm. The protein localises to the P-body. It localises to the nucleus. The protein resides in the PML body. Its subcellular location is the nucleus speckle. Its function is as follows. RNA-binding protein involved in deadenylation-dependent decapping of mRNAs, leading to the degradation of mRNAs. Acts as a scaffold protein that connects deadenylation and decapping machinery. Required for cytoplasmic mRNA processing body (P-body) assembly. The chain is Protein PAT1 homolog 1 (PATL1) from Pongo abelii (Sumatran orangutan).